The chain runs to 304 residues: Zinc carboxypeptidase (304 aa).

One can recognise a Peptidase M14 domain in the interval 1–294; that stretch reads QYHTLPEIYS…DSVVTILKES (294 aa). Zn(2+) contacts are provided by histidine 58 and glutamate 61. Cysteine 125 and cysteine 148 are disulfide-bonded. Histidine 184 provides a ligand contact to Zn(2+). Catalysis depends on glutamate 259, which acts as the Proton donor/acceptor.

The protein belongs to the peptidase M14 family. Requires Zn(2+) as cofactor. Gut specific.

It is found in the secreted. Its function is as follows. Involved in the digestion of the blood meal. The polypeptide is Zinc carboxypeptidase (Simulium vittatum (Striped black fly)).